A 109-amino-acid polypeptide reads, in one-letter code: UPF0060 membrane protein mma_0129 (109 aa).

4 consecutive transmembrane segments (helical) span residues 7-27, 31-51, 63-83, and 87-107; these read VALFVLTAIAEIVGCYLPYLW, GASIWLLVPAALALGIFVWLL, AAYGGAYVAVALAWLWVVDGI, and NWDFVGVAVTLAGMGIILFAP.

This sequence belongs to the UPF0060 family.

The protein resides in the cell inner membrane. This is UPF0060 membrane protein mma_0129 from Janthinobacterium sp. (strain Marseille) (Minibacterium massiliensis).